The primary structure comprises 352 residues: Holliday junction branch migration complex subunit RuvB (352 aa).

The interval M1–D26 is disordered. The interval T4–Y193 is large ATPase domain (RuvB-L). ATP-binding positions include L32, R33, G74, K77, T78, T79, E140–F142, R183, Y193, and R230. Residue T78 coordinates Mg(2+). Residues T194–D264 are small ATPAse domain (RuvB-S). The tract at residues S267–G352 is head domain (RuvB-H). DNA-binding residues include R322 and R327.

The protein belongs to the RuvB family. In terms of assembly, homohexamer. Forms an RuvA(8)-RuvB(12)-Holliday junction (HJ) complex. HJ DNA is sandwiched between 2 RuvA tetramers; dsDNA enters through RuvA and exits via RuvB. An RuvB hexamer assembles on each DNA strand where it exits the tetramer. Each RuvB hexamer is contacted by two RuvA subunits (via domain III) on 2 adjacent RuvB subunits; this complex drives branch migration. In the full resolvosome a probable DNA-RuvA(4)-RuvB(12)-RuvC(2) complex forms which resolves the HJ.

It localises to the cytoplasm. It catalyses the reaction ATP + H2O = ADP + phosphate + H(+). The RuvA-RuvB-RuvC complex processes Holliday junction (HJ) DNA during genetic recombination and DNA repair, while the RuvA-RuvB complex plays an important role in the rescue of blocked DNA replication forks via replication fork reversal (RFR). RuvA specifically binds to HJ cruciform DNA, conferring on it an open structure. The RuvB hexamer acts as an ATP-dependent pump, pulling dsDNA into and through the RuvAB complex. RuvB forms 2 homohexamers on either side of HJ DNA bound by 1 or 2 RuvA tetramers; 4 subunits per hexamer contact DNA at a time. Coordinated motions by a converter formed by DNA-disengaged RuvB subunits stimulates ATP hydrolysis and nucleotide exchange. Immobilization of the converter enables RuvB to convert the ATP-contained energy into a lever motion, pulling 2 nucleotides of DNA out of the RuvA tetramer per ATP hydrolyzed, thus driving DNA branch migration. The RuvB motors rotate together with the DNA substrate, which together with the progressing nucleotide cycle form the mechanistic basis for DNA recombination by continuous HJ branch migration. Branch migration allows RuvC to scan DNA until it finds its consensus sequence, where it cleaves and resolves cruciform DNA. This Azoarcus sp. (strain BH72) protein is Holliday junction branch migration complex subunit RuvB.